Reading from the N-terminus, the 368-residue chain is tRNA-specific 2-thiouridylase MnmA (368 aa).

ATP is bound by residues 6–13 (ALSGGVDS) and M32. C92 functions as the Nucleophile in the catalytic mechanism. A disulfide bridge connects residues C92 and C186. G116 provides a ligand contact to ATP. Residues 134 to 136 (KDQ) are interaction with tRNA. C186 serves as the catalytic Cysteine persulfide intermediate. An interaction with tRNA region spans residues 292-293 (RY).

The protein belongs to the MnmA/TRMU family.

It localises to the cytoplasm. The enzyme catalyses S-sulfanyl-L-cysteinyl-[protein] + uridine(34) in tRNA + AH2 + ATP = 2-thiouridine(34) in tRNA + L-cysteinyl-[protein] + A + AMP + diphosphate + H(+). In terms of biological role, catalyzes the 2-thiolation of uridine at the wobble position (U34) of tRNA, leading to the formation of s(2)U34. This chain is tRNA-specific 2-thiouridylase MnmA, found in Campylobacter hominis (strain ATCC BAA-381 / DSM 21671 / CCUG 45161 / LMG 19568 / NCTC 13146 / CH001A).